The following is a 289-amino-acid chain: Protease HtpX homolog (289 aa).

Transmembrane regions (helical) follow at residues 7–26 (TAAL…YWVI) and 31–48 (GLII…FSWY). Position 132 (histidine 132) interacts with Zn(2+). Residue glutamate 133 is part of the active site. Position 136 (histidine 136) interacts with Zn(2+). 2 consecutive transmembrane segments (helical) span residues 151–171 (VAGA…FGGG) and 182–202 (LGVL…QLAI). Zn(2+) is bound at residue glutamate 207.

Belongs to the peptidase M48B family. The cofactor is Zn(2+).

It localises to the cell inner membrane. The sequence is that of Protease HtpX homolog from Nostoc punctiforme (strain ATCC 29133 / PCC 73102).